A 294-amino-acid polypeptide reads, in one-letter code: N-acetylmuramic acid 6-phosphate etherase (294 aa).

Residues 56 to 219 (TSYSLRNGGR…STLSMVSVGK (164 aa)) enclose the SIS domain. Catalysis depends on Glu84, which acts as the Proton donor. Glu115 is a catalytic residue.

It belongs to the GCKR-like family. MurNAc-6-P etherase subfamily. In terms of assembly, homodimer.

The catalysed reaction is N-acetyl-D-muramate 6-phosphate + H2O = N-acetyl-D-glucosamine 6-phosphate + (R)-lactate. Its pathway is amino-sugar metabolism; 1,6-anhydro-N-acetylmuramate degradation. It functions in the pathway amino-sugar metabolism; N-acetylmuramate degradation. It participates in cell wall biogenesis; peptidoglycan recycling. Functionally, specifically catalyzes the cleavage of the D-lactyl ether substituent of MurNAc 6-phosphate, producing GlcNAc 6-phosphate and D-lactate. Together with AnmK, is also required for the utilization of anhydro-N-acetylmuramic acid (anhMurNAc) either imported from the medium or derived from its own cell wall murein, and thus plays a role in cell wall recycling. The sequence is that of N-acetylmuramic acid 6-phosphate etherase from Francisella tularensis subsp. tularensis (strain SCHU S4 / Schu 4).